The sequence spans 274 residues: MTVLDDILAGVREDLAARKALTTLDELKERAHRQVPAKDAQGLLKPRDAEQRGVKVIAEVKRRSPSKGALATIPDPAALAEQYELGGATVISVLTEQRRFGGSLEDLRAVRCAVDVPVLRKDFVVDSYQLWEARAWGADVVLLIVAALEQEALVSLIERTRSLGMTALVEVHTAEEVARALDADARVVGVNNRNLKTLEVDNATFADLAPLIPDHVVRIAESGVSGPRDVVEFARAGADAVLVGETLVRGEDPRRAVADLVAAGAHPAVQAVRP.

The protein belongs to the TrpC family.

The catalysed reaction is 1-(2-carboxyphenylamino)-1-deoxy-D-ribulose 5-phosphate + H(+) = (1S,2R)-1-C-(indol-3-yl)glycerol 3-phosphate + CO2 + H2O. It functions in the pathway amino-acid biosynthesis; L-tryptophan biosynthesis; L-tryptophan from chorismate: step 4/5. This is Indole-3-glycerol phosphate synthase from Kineococcus radiotolerans (strain ATCC BAA-149 / DSM 14245 / SRS30216).